A 1843-amino-acid polypeptide reads, in one-letter code: Nonribosomal peptide synthetase SIDD (1843 aa).

Positions 1 to 83 (MLSIDDHGGG…QQQQQQQQRS (83 aa)) are disordered. A compositionally biased stretch (low complexity) spans 65 to 81 (QQQQQQQQQQQQQQQQQ). Residues 133 to 528 (TYSELEHLST…TEVEHHIQTC (396 aa)) form an adenylation 1 region. The segment at 628-647 (KLGATHADEGPQEEPETDAE) is disordered. Residues 641–716 (EPETDAEKKL…AMANKSTSIS (76 aa)) enclose the Carrier 1 domain. Residue Ser677 is modified to O-(pantetheine 4'-phosphoryl)serine. Positions 753 to 1175 (VEDVYPCTPL…ALSDDDAAAL (423 aa)) are condensation 1. The region spanning 1289 to 1365 (SATSQRQRRL…EMAAVMECTD (77 aa)) is the Carrier 2 domain. The residue at position 1326 (Ser1326) is an O-(pantetheine 4'-phosphoryl)serine. Residues 1447 to 1734 (FFDGPVDLRR…LREIAENCGL (288 aa)) form a condensation 2 region.

Belongs to the NRP synthetase family. Pantetheine 4'-phosphate is required as a cofactor.

Its pathway is siderophore biosynthesis. Nonribosomal peptide synthetase; part of the gene cluster that mediates the biosynthesis of at least 11 siderophores, including beauverichelin A, dimerumic acid (DA), Na-dimethyl coprogen (NADC), eleutherazine B, ferricrocin (FC), fusarinine A, fusarinine C (FsC), metachelin A, mevalonolactone, rhodotorulic acid (RA) and tenellin. This cocktail of siderophores for iron metabolism is essential for virulence, and more specifically for the fungal virulence in penetrating through the host cuticle. Siderophore synthesis is also involved in conidial germination under iron-deficient conditions. SIDC catalyzes the assembly of ferricrocin whereas SIDD catalyzes the assembly of fusarinine C. This chain is Nonribosomal peptide synthetase SIDD, found in Beauveria bassiana (strain ARSEF 2860) (White muscardine disease fungus).